The primary structure comprises 384 residues: Alanine racemase (384 aa).

K39 functions as the Proton acceptor; specific for D-alanine in the catalytic mechanism. At K39 the chain carries N6-(pyridoxal phosphate)lysine. R138 serves as a coordination point for substrate. The active-site Proton acceptor; specific for L-alanine is Y265. Position 312 (M312) interacts with substrate.

The protein belongs to the alanine racemase family. It depends on pyridoxal 5'-phosphate as a cofactor.

It catalyses the reaction L-alanine = D-alanine. It functions in the pathway amino-acid biosynthesis; D-alanine biosynthesis; D-alanine from L-alanine: step 1/1. In terms of biological role, catalyzes the interconversion of L-alanine and D-alanine. May also act on other amino acids. The chain is Alanine racemase (alr) from Staphylococcus carnosus (strain TM300).